Here is a 206-residue protein sequence, read N- to C-terminus: GCN5-like protein acetyltransferase Rv2170 (206 aa).

Residues 44–205 (EHIRRRGWQA…AFAILGRTLP (162 aa)) form the N-acetyltransferase domain. Tyrosine 176 (proton donor) is an active-site residue.

The protein belongs to the acetyltransferase family.

The catalysed reaction is L-lysyl-[protein] + acetyl-CoA = N(6)-acetyl-L-lysyl-[protein] + CoA + H(+). It catalyses the reaction propanoyl-CoA + L-lysyl-[protein] = N(6)-propanoyl-L-lysyl-[protein] + CoA + H(+). The enzyme catalyses succinyl-CoA + L-lysyl-[protein] = N(6)-succinyl-L-lysyl-[protein] + CoA + H(+). Functionally, acetyltransferase involved in the post-translational regulation of the central metabolic enzyme isocitrate dehydrogenase 1 (ICDH-1) through lysine acetylation. Catalyzes the acetylation of ICDH-1 at Lys-30 and Lys-129, using acetyl-CoA as a donor, leading to a reduction of ICDH-1 enzyme activity. Can also use propionyl-CoA and succinyl-CoA as donors. Cannot act on the isocitrate dehydrogenase 2 (ICDH-2). Might play a role in regulating the TCA cycle and methylcitrate cycle when M.tuberculosis utilizes fatty acid as carbon source. In terms of biological role, in addition, it can acetylate the amino group of isoniazid (INH), one of the first-line drugs used for the treatment of tuberculosis, thereby canceling out the drug toxicity. Acts by catalyzing the transfer of an acetyl group from acetyl-CoA to INH. Following acetylation, INH is broken down into isonicotinic acid and acetylhydrazine. M.smegmatis and M.tuberculosis H37Ra strains overexpressing Rv2170 are resistant to INH. Has little or no acetyltransferase activity with other antibiotics such as streptomycin, neomycin, kanamycin, amikacin, apramycin and gentamicin. In Mycobacterium tuberculosis (strain ATCC 25618 / H37Rv), this protein is GCN5-like protein acetyltransferase Rv2170.